The sequence spans 306 residues: Aspartate carbamoyltransferase catalytic subunit (306 aa).

Carbamoyl phosphate is bound by residues Arg56 and Thr57. Lys84 is an L-aspartate binding site. Residues Arg106, His134, and Gln137 each coordinate carbamoyl phosphate. L-aspartate is bound by residues Arg167 and Arg221. Residues Gly262 and Pro263 each contribute to the carbamoyl phosphate site.

This sequence belongs to the aspartate/ornithine carbamoyltransferase superfamily. ATCase family. As to quaternary structure, heterododecamer (2C3:3R2) of six catalytic PyrB chains organized as two trimers (C3), and six regulatory PyrI chains organized as three dimers (R2).

It carries out the reaction carbamoyl phosphate + L-aspartate = N-carbamoyl-L-aspartate + phosphate + H(+). It functions in the pathway pyrimidine metabolism; UMP biosynthesis via de novo pathway; (S)-dihydroorotate from bicarbonate: step 2/3. Its function is as follows. Catalyzes the condensation of carbamoyl phosphate and aspartate to form carbamoyl aspartate and inorganic phosphate, the committed step in the de novo pyrimidine nucleotide biosynthesis pathway. In Desulforudis audaxviator (strain MP104C), this protein is Aspartate carbamoyltransferase catalytic subunit.